We begin with the raw amino-acid sequence, 463 residues long: uncharacterized protein (463 aa).

In terms of domain architecture, PE spans 1 to 93 (MSYMIAVPDM…AGAYASAEAT (93 aa)). Disordered regions lie at residues 231–320 (GGAG…AGNG) and 408–463 (NGGD…TPGQ). Over residues 408-451 (NGGDGGKGGDAQLIGNGGNGGNGGKGGTGLMPGINGTGGAGGSR) the composition is skewed to gly residues.

It belongs to the mycobacterial PE family. PGRS subfamily.

This is an uncharacterized protein from Mycobacterium tuberculosis (strain ATCC 25618 / H37Rv).